The following is a 154-amino-acid chain: Phosphopantetheine adenylyltransferase (154 aa).

It belongs to the eukaryotic CoaD family.

The protein localises to the cytoplasm. It catalyses the reaction (R)-4'-phosphopantetheine + ATP + H(+) = 3'-dephospho-CoA + diphosphate. It functions in the pathway cofactor biosynthesis; coenzyme A biosynthesis. In terms of biological role, reversibly transfers an adenylyl group from ATP to 4'-phosphopantetheine, yielding dephospho-CoA (dPCoA) and pyrophosphate. The sequence is that of Phosphopantetheine adenylyltransferase from Methanosarcina mazei (strain ATCC BAA-159 / DSM 3647 / Goe1 / Go1 / JCM 11833 / OCM 88) (Methanosarcina frisia).